The following is a 96-amino-acid chain: GTPase HRas (96 aa).

N-acetylmethionine is present on Met1. Thr2 carries the N-acetylthreonine; in GTPase HRas, N-terminally processed modification. Residue 10–17 coordinates GTP; it reads GAGGVGKS. The Effector region motif lies at 32–40; sequence YDPTIEDSY. 57-61 is a GTP binding site; that stretch reads DTAGQ.

The protein belongs to the small GTPase superfamily. Ras family. In its GTP-bound form interacts with PLCE1. Interacts with TBC1D10C. Interacts with RGL3. Interacts with HSPD1. Found in a complex with at least BRAF, HRAS, MAP2K1, MAPK3 and RGS14. Interacts (active GTP-bound form) with RGS14 (via RBD 1 domain). Forms a signaling complex with RASGRP1 and DGKZ. Interacts with RASSF5. Interacts with PDE6D. Interacts with IKZF3. Interacts with RACK1. Interacts with PIK3CG; the interaction is required for membrane recruitment and beta-gamma G protein dimer-dependent activation of the PI3K gamma complex PIK3CG:PIK3R6. Interacts with RAPGEF2. Interacts (active GTP-bound form) with both SHOC2 and PP1c (all isoforms) to form a tertiary complex; SHOC2 and PP1c preferably bind M-Ras/MRAS, but they also bind K-Ras/KRAS, N-Ras/NRAS and H-Ras/HRAS. Interacts (in GTP-bound form) with Oog1. Interacts (GTP-bound form) with MAPKAP1/SIN1; inhibiting H-Ras/HRAS activity. Ubiquitinated by the BCR(LZTR1) E3 ubiquitin ligase complex at Lys-170 in a non-degradative manner, leading to inhibit Ras signaling by decreasing Ras association with membranes.

Its subcellular location is the cell membrane. It localises to the golgi apparatus. The protein resides in the golgi apparatus membrane. It carries out the reaction GTP + H2O = GDP + phosphate + H(+). With respect to regulation, alternates between an inactive form bound to GDP and an active form bound to GTP. Activated by a guanine nucleotide-exchange factor (GEF) and inactivated by a GTPase-activating protein (GAP). Functionally, ras proteins bind GDP/GTP and possess intrinsic GTPase activity. This Mesocricetus auratus (Golden hamster) protein is GTPase HRas (HRAS).